A 533-amino-acid polypeptide reads, in one-letter code: MTEQATTTDELAFTRPYGEQEKQILTAEAVEFLTELVTHFTPQRNKLLAARIQQQQDIDNGTLPDFISETASIRDADWKIRGIPADLEDRRVEITGPVERKMVINALNANVKVFMADFEDSLAPDWNKVIDGQINLRDAVNGTISYTNEAGKIYQLKPNPAVLICRVRGLHLPEKHVTWRGEAIPGSLFDFALYFFHNYQALLAKGSGPYFYLPKTQSWQEAAWWSEVFSYAEDRFNLPRGTIKATLLIETLPAVFQMDEILHALRDHIVGLNCGRWDYIFSYIKTLKNYPDRVLPDRQAVTMDKPFLNAYSRLLIKTCHKRGAFAMGGMAAFIPSKDEEHNNQVLNKVKADKSLEANNGHDGTWIAHPGLADTAMAVFNDILGSRKNQLEVMREQDAPITADQLLAPCDGERTEEGMRANIRVAVQYIEAWISGNGCVPIYGLMEDAATAEISRTSIWQWIHHQKTLSNGKPVTKALFRQMLGEEMKVIASELGEERFSQGRFDDAARLMEQITTSDELIDFLTLPGYRLLA.

The active-site Proton acceptor is Arg-166. The Proton donor role is filled by Asp-447.

It belongs to the malate synthase family.

The protein resides in the cytoplasm. It catalyses the reaction glyoxylate + acetyl-CoA + H2O = (S)-malate + CoA + H(+). Its pathway is carbohydrate metabolism; glyoxylate cycle; (S)-malate from isocitrate: step 2/2. The protein is Malate synthase A (aceB) of Escherichia coli (strain K12).